Here is an 82-residue protein sequence, read N- to C-terminus: U10-myrmicitoxin-Mri1c (82 aa).

The signal sequence occupies residues 1–26; that stretch reads MRLSYVSLTLAIIFVMAIVHAPETEA. A propeptide spanning residues 27–52 is cleaved from the precursor; sequence KAYPEADAVGEASAVGEADAVGVADP. I81 bears the Isoleucine amide mark.

The protein belongs to the formicidae venom precursor-01 superfamily. As to expression, expressed by the venom gland.

It is found in the secreted. Functionally, induces paralysis 5 minutes after injection into blowflies (L.caesar). In most cases is not lethal 24 hours after injection, but paralysis is irreversible. May have antimicrobial properties, like most ant linear peptides. In Manica rubida (European giant red ant), this protein is U10-myrmicitoxin-Mri1c.